Here is a 721-residue protein sequence, read N- to C-terminus: MASFKGFSANTVPVSKAKRDISSLAATPGLRSQSFTPSVDMSQSREFLTKAIEQGSMSIPYQHVNVPKVDRKVVSLVVRPFSSGAFSISGVISPAHAYLLECLPQLEQAMAFVASPESFQASDVAKRFAIKPGMSLQDAITAFINFVSAMLKMTVTRQNFDVIVAEIERLASTSVSVRTEEAKVADEELMLFGLDHRGPQLVDVSDAKGIMKAADIQTTHDVHLAPGVGNIDPEIYNEGRFMFMQHKPLAADQSYFTLETADYFKIYPTYDEHDGRMADQKQSGLILCTKDEVLAEQTIFKLDAPDDKTVHLLDRDDDHVVARFTKVFIEDVAPGHHAAQRSGQRSVLDDLYANTQVISITSAALKWVVKHGVSDGIVNRKNVKVCVGFDPLYTLSTHNGVSLCALLMDEKLSVLNSACRMTLRSLMKTGRDVDAHRAFQRVLSQGYTSLMCYYHPSRKLAYGEVLFLERSNDVTDGIKLQLDASRQCHECPVLQQKVVELEKQIIMQKSIQSDPTPVALQPLLSQLRELSSEVTRLQMELSRAQSLNAQLEADVKSAQSCSLDMYLRHHTCINGHAKEDELLDAVRVAPDVRREIMEKRSEVRQGWCERISKEAAAKCQTVIDDLTLMNGKQAQEITELRDSAEKYEKQIAELVSTITQNQITYQQELQALVAKNVELDALNQRQAKSLRITPSLLSATPIDSVDDVADLIDFSVPTDEL.

The tract at residues 1–13 (MASFKGFSANTVP) is interaction with sigma-NS. Positions 1-38 (MASFKGFSANTVPVSKAKRDISSLAATPGLRSQSFTPS) are RNA-binding. The segment at 14–40 (VSKAKRDISSLAATPGLRSQSFTPSVD) is interaction with mu-2. The involved in the formation of factory-like inclusions stretch occupies residues 471 to 721 (SNDVTDGIKL…IDFSVPTDEL (251 aa)). 2 coiled-coil regions span residues 522–559 (PLLS…KSAQ) and 628–684 (LMNG…ALNQ).

This sequence belongs to the orthoreovirus mu-NS protein family. In terms of assembly, interacts with mu-2. Interacts with sigma-NS; in viral factories. Interacts with the inner capsid proteins lambda-1 and sigma-2, and outer capsid protein lambda-2; in viral factories. The N-terminus is blocked.

It is found in the host cytoplasm. Its function is as follows. Non-structural protein implicated with protein sigma-NS in forming the matrix of viral factories, which are large inclusions in the host cytoplasm where replication intermediates are assembled and viral RNA replication takes place. Together with mu-2, recruits the other core proteins to these factories. Binds RNA and recruits viral mRNAs to sites of viral replication. In Reovirus type 3 (strain Dearing) (T3D), this protein is Protein mu-NS (M3).